A 523-amino-acid chain; its full sequence is Protein nucleotidyltransferase YdiU (523 aa).

ATP contacts are provided by glycine 101, glycine 103, arginine 104, lysine 128, aspartate 140, glycine 141, arginine 198, and arginine 205. Aspartate 275 acts as the Proton acceptor in catalysis. Mg(2+) is bound by residues asparagine 276 and aspartate 285. Position 285 (aspartate 285) interacts with ATP.

It belongs to the SELO family. Requires Mg(2+) as cofactor. It depends on Mn(2+) as a cofactor.

The enzyme catalyses L-seryl-[protein] + ATP = 3-O-(5'-adenylyl)-L-seryl-[protein] + diphosphate. The catalysed reaction is L-threonyl-[protein] + ATP = 3-O-(5'-adenylyl)-L-threonyl-[protein] + diphosphate. It carries out the reaction L-tyrosyl-[protein] + ATP = O-(5'-adenylyl)-L-tyrosyl-[protein] + diphosphate. It catalyses the reaction L-histidyl-[protein] + UTP = N(tele)-(5'-uridylyl)-L-histidyl-[protein] + diphosphate. The enzyme catalyses L-seryl-[protein] + UTP = O-(5'-uridylyl)-L-seryl-[protein] + diphosphate. The catalysed reaction is L-tyrosyl-[protein] + UTP = O-(5'-uridylyl)-L-tyrosyl-[protein] + diphosphate. Functionally, nucleotidyltransferase involved in the post-translational modification of proteins. It can catalyze the addition of adenosine monophosphate (AMP) or uridine monophosphate (UMP) to a protein, resulting in modifications known as AMPylation and UMPylation. This is Protein nucleotidyltransferase YdiU from Aromatoleum aromaticum (strain DSM 19018 / LMG 30748 / EbN1) (Azoarcus sp. (strain EbN1)).